A 209-amino-acid polypeptide reads, in one-letter code: Uracil phosphoribosyltransferase (209 aa).

Residues R79, R104, and 131 to 139 each bind 5-phospho-alpha-D-ribose 1-diphosphate; that span reads DPMLATGGS. Uracil-binding positions include I194 and 199 to 201; that span reads GDA. D200 contributes to the 5-phospho-alpha-D-ribose 1-diphosphate binding site.

The protein belongs to the UPRTase family. The cofactor is Mg(2+).

It carries out the reaction UMP + diphosphate = 5-phospho-alpha-D-ribose 1-diphosphate + uracil. The protein operates within pyrimidine metabolism; UMP biosynthesis via salvage pathway; UMP from uracil: step 1/1. With respect to regulation, allosterically activated by GTP. Catalyzes the conversion of uracil and 5-phospho-alpha-D-ribose 1-diphosphate (PRPP) to UMP and diphosphate. In Levilactobacillus brevis (strain ATCC 367 / BCRC 12310 / CIP 105137 / JCM 1170 / LMG 11437 / NCIMB 947 / NCTC 947) (Lactobacillus brevis), this protein is Uracil phosphoribosyltransferase.